Reading from the N-terminus, the 245-residue chain is Histone deacetylase HDT1 (245 aa).

Residue M1 is modified to N-acetylmethionine. Required to repress transcription regions lie at residues 2–5 (EFWG) and 101–162 (GYSE…EEEE). The tract at residues 99–245 (PQGYSEEEEE…HNKAKHAAAK (147 aa)) is disordered. Over residues 103–113 (SEEEEEEEEEV) the composition is skewed to acidic residues. Positions 114–124 (PAGNAAKAVAK) are enriched in low complexity. A compositionally biased stretch (acidic residues) spans 137–162 (DDEEDESDSDGMDEDDSDGEDSEEEE). Over residues 178-195 (TTPKAPVSAKKAKVAVTP) the composition is skewed to low complexity. Polar residues predominate over residues 208–234 (ANQSPKSASQVSCGSCKKTFNSGNALE). S211 carries the phosphoserine modification. The C2H2-type zinc-finger motif lies at 218-241 (VSCGSCKKTFNSGNALESHNKAKH).

The protein belongs to the histone deacetylase HD2 family. As to quaternary structure, interacts with DNMT2. Interacts with DEK3. As to expression, expressed in leaves, roots, stems, young plantlets, flowers and siliques. Highest levels in ovules, embryos, shoot apical meristems and first leaves. Also expressed in somatic embryos.

The protein localises to the nucleus. Its subcellular location is the nucleolus. Probably mediates the deacetylation of lysine residues on the N-terminal part of the core histones (H2A, H2B, H3 and H4). Histone deacetylation gives a tag for epigenetic repression and plays an important role in transcriptional regulation, cell cycle progression and developmental events. Required for histone H3 'Lys-9' deacetylation. Involved in rRNA gene silencing in nucleolar dominance. Seems to be implicated in the regulation of genes involved in seeds development. The sequence is that of Histone deacetylase HDT1 from Arabidopsis thaliana (Mouse-ear cress).